The primary structure comprises 186 residues: Ribosome-recycling factor (186 aa).

The interval Glu144 to Lys163 is disordered.

This sequence belongs to the RRF family.

The protein resides in the cytoplasm. Responsible for the release of ribosomes from messenger RNA at the termination of protein biosynthesis. May increase the efficiency of translation by recycling ribosomes from one round of translation to another. This chain is Ribosome-recycling factor, found in Rhizobium etli (strain CIAT 652).